Consider the following 316-residue polypeptide: Putative HTH-type transcriptional regulatory protein PYRAB03670 (316 aa).

The HTH cro/C1-type domain occupies 131-189 (LKDLREKHGYSLSELANILGVSRKSLQRYEKGDSMVTLEVALRLEEVFDEALVKPINVL). The H-T-H motif DNA-binding region spans 142–161 (LSELANILGVSRKSLQRYEK).

In Pyrococcus abyssi (strain GE5 / Orsay), this protein is Putative HTH-type transcriptional regulatory protein PYRAB03670.